Consider the following 102-residue polypeptide: MTMKRLLLVSTLAGASALATLPANAFWGWNPFGWGGGPWDGPWGGGPWGSPWYGGYPYHGGYYPYGLYGVPYGWGAPVYGYPGYVYPGYAYPAPTQPSTKSQ.

A signal peptide spans 1-25 (MTMKRLLLVSTLAGASALATLPANA).

The protein envelope of the sulfur globules is composed of the three different proteins CV1, CV2 and CV3.

Its function is as follows. Structural protein of the sulfur globules, which are intracellular globules that serve for sulfur storage in purple sulfur bacteria. This is Sulfur globule protein CV3 (sgpC) from Allochromatium vinosum (strain ATCC 17899 / DSM 180 / NBRC 103801 / NCIMB 10441 / D) (Chromatium vinosum).